A 364-amino-acid polypeptide reads, in one-letter code: C3a anaphylatoxin chemotactic receptor (364 aa).

The Extracellular segment spans residues 1–50 (MGDNMDFSEHYGNFSENYVTESYGEFDLYYDPLNETSLSEQGHRSIWVLS). 2 N-linked (GlcNAc...) asparagine glycosylation sites follow: Asn13 and Asn34. The chain crosses the membrane as a helical span at residues 51 to 71 (IVLCSIACVLGITGNAFVIWI). Topologically, residues 72–82 (AGVKMKRTVNT) are cytoplasmic. Residues 83 to 103 (IWFVNLAAADLLCCVSIPFSI) traverse the membrane as a helical segment. Residues 104-120 (ADIILNSHWPYGEAMCK) lie on the Extracellular side of the membrane. Cys119 and Cys198 are oxidised to a cystine. The helical transmembrane segment at 121-141 (ILPSMVVLNMFASVFTLVLIS) threads the bilayer. At 142-159 (LDRFALVILPVWAQNHRS) the chain is on the cytoplasmic side. Residues 160 to 180 (ITLAWLLCGLVWVLGLLLSLP) form a helical membrane-spanning segment. Residues 181 to 220 (SMIYREIVVHDDMNITLCIYNHLQDKTEGNQSAIKAIHVT) lie on the Extracellular side of the membrane. The helical transmembrane segment at 221–241 (RLILGFLIPLLVIAVCYLLIG) threads the bilayer. Residues 242 to 256 (RRVSSGRFKSQRAFQ) lie on the Cytoplasmic side of the membrane. A helical transmembrane segment spans residues 257 to 277 (IILVVVTTFFVCWLPYHVIGL). Over 278–295 (VIEYGKEASQVMARALDP) the chain is Extracellular. A helical transmembrane segment spans residues 296-316 (LAISLAYVNSCLNPVLYVFMG). The Cytoplasmic segment spans residues 317-364 (QDFKERVRVSLRKIFEKVFSEDVTLRSSVYSKGQSQLSRATNSSEAQV).

The protein belongs to the G-protein coupled receptor 1 family.

It localises to the cell membrane. In terms of biological role, receptor for the chemotactic and inflammatory peptide anaphylatoxin C3a. This receptor stimulates chemotaxis, granule enzyme release and superoxide anion production. This chain is C3a anaphylatoxin chemotactic receptor (c3ar1), found in Oncorhynchus mykiss (Rainbow trout).